Here is a 158-residue protein sequence, read N- to C-terminus: uncharacterized protein (158 aa).

A run of 2 helical transmembrane segments spans residues leucine 66–methionine 86 and phenylalanine 94–isoleucine 114.

It localises to the membrane. This is an uncharacterized protein from Saccharomyces cerevisiae (strain ATCC 204508 / S288c) (Baker's yeast).